The chain runs to 178 residues: MVMLADALVKRMIEVGALKFGDFVLSSGKRSRVYVDVKLASTFPDILEMISEGMAAKLKDLEFDRIACVELGGVPIAVALSLKMKKPLVIFRKEKKDYGIKGDRIGEVKEGEKVVVVEDVITTGSSALSAARRVEESGASVAAIIAVVDREESGRNFMSLLKLSDLIEAHDSIQPTES.

5-phospho-alpha-D-ribose 1-diphosphate-binding positions include Arg92, Lys93, Lys96, and 118–126; that span reads EDVITTGSS. Orotate-binding residues include Thr122 and Arg150.

This sequence belongs to the purine/pyrimidine phosphoribosyltransferase family. PyrE subfamily. Homodimer. Requires Mg(2+) as cofactor.

It catalyses the reaction orotidine 5'-phosphate + diphosphate = orotate + 5-phospho-alpha-D-ribose 1-diphosphate. Its pathway is pyrimidine metabolism; UMP biosynthesis via de novo pathway; UMP from orotate: step 1/2. Its function is as follows. Catalyzes the transfer of a ribosyl phosphate group from 5-phosphoribose 1-diphosphate to orotate, leading to the formation of orotidine monophosphate (OMP). The chain is Orotate phosphoribosyltransferase from Archaeoglobus fulgidus (strain ATCC 49558 / DSM 4304 / JCM 9628 / NBRC 100126 / VC-16).